The sequence spans 533 residues: Nuclear receptor corepressor 1 (533 aa).

Positions 1 to 17 are enriched in basic and acidic residues; the sequence is KDKGPPPKSRYEEELRT. Residues 1–21 form a disordered region; sequence KDKGPPPKSRYEEELRTRGKT. A CORNR box 1 motif is present at residues 29-33; it reads IDVII. The interval 37–144 is disordered; the sequence is IASDKDARER…EGMGQVPRTH (108 aa). Residues 38 to 47 are compositionally biased toward basic and acidic residues; that stretch reads ASDKDARERG. The segment covering 48 to 59 has biased composition (low complexity); sequence SQSSDSSSSLSS. Phosphoserine occurs at positions 73 and 77. An ID1 region spans residues 130-209; that stretch reads PSSQAEGMGQ…QSQTVLHPRP (80 aa). The tract at residues 145–148 is required for interaction with RARA in the absence of its ligand; the sequence is RLIT. The CORNR box 2 signature appears at 153 to 157; the sequence is ICQII. Low complexity predominate over residues 165 to 180; it reads QVPSQPSTSTFQTSPS. The interval 165–254 is disordered; the sequence is QVPSQPSTST…SPPQGPAVHE (90 aa). The segment covering 181 to 204 has biased composition (polar residues); sequence ALSSTPVRTKPSSRYSPESQSQTV. 5 positions are modified to phosphoserine: S196, S214, S230, S245, and S278. Residues 218–236 are compositionally biased toward basic and acidic residues; sequence LVDKSRGSRPGKSPERSHI. The segment at 306 to 367 is ID2; sequence IFRKLNSSGG…EDIIRKALMG (62 aa). The CORNR box 3 motif lies at 357–361; that stretch reads LEDII. Residues 382–399 are compositionally biased toward low complexity; that stretch reads HPVGVVPGSASTSVVTSS. The interval 382-476 is disordered; that stretch reads HPVGVVPGSA…RPSSTGSTQF (95 aa). T492 carries the phosphothreonine modification. Phosphoserine occurs at positions 529 and 531.

It belongs to the N-CoR nuclear receptor corepressors family. As to quaternary structure, forms a large corepressor complex that contains SIN3A/B and histone deacetylases HDAC1 and HDAC2. This complex associates with the thyroid receptor (TR) and the retinoid acid receptor (RAR) in the absence of ligand. Interacts directly with RARA; the interaction is facilitated with RARA trimethylation. Component of the N-Cor repressor complex, at least composed of CBFA2T3, HEXIM1, NCOR1, NCOR2, HDAC3, TBL1X, TBL1XR1, CORO2A and GPS2. Interacts with ZBTB33; the interaction serves to recruit the N-CoR complex to promoter regions containing methylated CpG dinucleotides. Interacts with TRIM28 and KDM3A. Interacts (via the RD1 domain) with BAZ1A (via its N-terminal); the interaction corepresses a number of NCOR1-regulated genes. Interacts with BCL6, C1D, DACH1, HEXIM1, HDAC7, RORA, RORC, SAP30, SIAH2, SIN3A and SIN3B. May interact with DEAF1. Interacts with RXRA. Interacts with SETD5. Interacts with VDR. Interacts with ZBTB7A. Interacts with AR. Interacts with HDAC3. Post-translationally, ubiquitinated; mediated by SIAH2 and leading to its subsequent proteasomal degradation.

It is found in the nucleus. Its function is as follows. Mediates transcriptional repression by certain nuclear receptors. Part of a complex which promotes histone deacetylation and the formation of repressive chromatin structures which may impede the access of basal transcription factors. Participates in the transcriptional repressor activity produced by BCL6. Recruited by ZBTB7A to the androgen response elements/ARE on target genes, negatively regulates androgen receptor signaling and androgen-induced cell proliferation. Mediates the NR1D1-dependent repression and circadian regulation of TSHB expression. The NCOR1-HDAC3 complex regulates the circadian expression of the core clock gene ARTNL/BMAL1 and the genes involved in lipid metabolism in the liver. This chain is Nuclear receptor corepressor 1 (Ncor1), found in Rattus norvegicus (Rat).